Reading from the N-terminus, the 157-residue chain is MAAGDFRLCDVVLDDTIGRSTPDVEHERAVAIFDLIEENSFAPIGHAGGPYRLNISLADSKLVFAITTEDGGNVATHILSLTPFRRIVKDYFMICESYYEAIRSATPSRIEAIDMGRRGIHNEGSQTLKDRLTGKIEIDFDTARRLFTLVCVLYWRG.

Belongs to the UPF0262 family.

This Rhizobium etli (strain CIAT 652) protein is UPF0262 protein RHECIAT_CH0000657.